A 247-amino-acid polypeptide reads, in one-letter code: Geranylgeranylglyceryl phosphate synthase (247 aa).

Residues aspartate 24 and serine 53 each contribute to the Mg(2+) site. Sn-glycerol 1-phosphate is bound by residues 172–178 (YLEAGSG), 203–204 (GG), and 225–226 (GT).

Belongs to the GGGP/HepGP synthase family. Group II subfamily. Mg(2+) is required as a cofactor.

It localises to the cytoplasm. The catalysed reaction is sn-glycerol 1-phosphate + (2E,6E,10E)-geranylgeranyl diphosphate = sn-3-O-(geranylgeranyl)glycerol 1-phosphate + diphosphate. It participates in membrane lipid metabolism; glycerophospholipid metabolism. Functionally, prenyltransferase that catalyzes the transfer of the geranylgeranyl moiety of geranylgeranyl diphosphate (GGPP) to the C3 hydroxyl of sn-glycerol-1-phosphate (G1P). This reaction is the first ether-bond-formation step in the biosynthesis of archaeal membrane lipids. The protein is Geranylgeranylglyceryl phosphate synthase of Cenarchaeum symbiosum (strain A).